Reading from the N-terminus, the 160-residue chain is Transcription elongation factor GreA (160 aa).

A coiled-coil region spans residues E12–S76.

Belongs to the GreA/GreB family.

Functionally, necessary for efficient RNA polymerase transcription elongation past template-encoded arresting sites. The arresting sites in DNA have the property of trapping a certain fraction of elongating RNA polymerases that pass through, resulting in locked ternary complexes. Cleavage of the nascent transcript by cleavage factors such as GreA or GreB allows the resumption of elongation from the new 3'terminus. GreA releases sequences of 2 to 3 nucleotides. In Clostridium botulinum (strain Kyoto / Type A2), this protein is Transcription elongation factor GreA.